The primary structure comprises 404 residues: Probable tRNA sulfurtransferase (404 aa).

A THUMP domain is found at 61–166 (EAVSERLKDV…SGYSYIMCDE (106 aa)). Residues 184-185 (LL), 209-210 (HF), Arg266, Gly288, and Gln297 contribute to the ATP site.

Belongs to the ThiI family.

It is found in the cytoplasm. The catalysed reaction is [ThiI sulfur-carrier protein]-S-sulfanyl-L-cysteine + a uridine in tRNA + 2 reduced [2Fe-2S]-[ferredoxin] + ATP + H(+) = [ThiI sulfur-carrier protein]-L-cysteine + a 4-thiouridine in tRNA + 2 oxidized [2Fe-2S]-[ferredoxin] + AMP + diphosphate. It catalyses the reaction [ThiS sulfur-carrier protein]-C-terminal Gly-Gly-AMP + S-sulfanyl-L-cysteinyl-[cysteine desulfurase] + AH2 = [ThiS sulfur-carrier protein]-C-terminal-Gly-aminoethanethioate + L-cysteinyl-[cysteine desulfurase] + A + AMP + 2 H(+). It participates in cofactor biosynthesis; thiamine diphosphate biosynthesis. Catalyzes the ATP-dependent transfer of a sulfur to tRNA to produce 4-thiouridine in position 8 of tRNAs, which functions as a near-UV photosensor. Also catalyzes the transfer of sulfur to the sulfur carrier protein ThiS, forming ThiS-thiocarboxylate. This is a step in the synthesis of thiazole, in the thiamine biosynthesis pathway. The sulfur is donated as persulfide by IscS. This chain is Probable tRNA sulfurtransferase, found in Bacillus cereus (strain ZK / E33L).